A 426-amino-acid polypeptide reads, in one-letter code: Phosphomethylpyrimidine synthase (426 aa).

Substrate is bound by residues N65, M94, Y123, H162, S184–G186, D225–R228, and E264. H268 lines the Zn(2+) pocket. Residue Y291 coordinates substrate. Position 332 (H332) interacts with Zn(2+). Residues C408, C411, and C415 each contribute to the [4Fe-4S] cluster site.

Belongs to the ThiC family. [4Fe-4S] cluster is required as a cofactor.

The enzyme catalyses 5-amino-1-(5-phospho-beta-D-ribosyl)imidazole + S-adenosyl-L-methionine = 4-amino-2-methyl-5-(phosphooxymethyl)pyrimidine + CO + 5'-deoxyadenosine + formate + L-methionine + 3 H(+). It functions in the pathway cofactor biosynthesis; thiamine diphosphate biosynthesis. Functionally, catalyzes the synthesis of the hydroxymethylpyrimidine phosphate (HMP-P) moiety of thiamine from aminoimidazole ribotide (AIR) in a radical S-adenosyl-L-methionine (SAM)-dependent reaction. The chain is Phosphomethylpyrimidine synthase from Methanococcus maripaludis (strain C6 / ATCC BAA-1332).